The sequence spans 398 residues: MNIHEYQAKRLLHEYGAPIANGVAVYSVEQAEKWAKKLPGPLYVVKSQIHAGGRGKGKFKELDPDAKGGVRLAKSVEEVVANVKEMLGKTLVTKQTGPEGKQVNRLYIEDGADIERELYLSLLVDRNVGRVAFVVSTEGGMDIETVAEETPEKILTLPINSTQGVTSSDCARLCDALDLHDSAREDGEKLFPILYKAFCEKDMSLLEINPLIVMTNGHLRVLDAKVSFDNNALFRHPDILELRDTSEEDPKEIEASKHDLAYVALEGTIGCMVNGAGLAMATMDIIKLYGAEPANFLDVGGGASKEKVTAAFKIITADPNVKGILVNIFGGIMRCDVIAEGVVAAVREVGLKVPLVVRLEGTNVEQGKAIISDSGLNVIPADDLDDAAQKIVAAVKGA.

The ATP-grasp domain occupies 9–254 (KRLLHEYGAP…TSEEDPKEIE (246 aa)). Residues K46, 53 to 55 (GRG), E109, A112, and E117 each bind ATP. Mg(2+)-binding residues include N209 and D223. Substrate is bound by residues N274 and 331 to 333 (GIM).

It belongs to the succinate/malate CoA ligase beta subunit family. Heterotetramer of two alpha and two beta subunits. Requires Mg(2+) as cofactor.

It carries out the reaction succinate + ATP + CoA = succinyl-CoA + ADP + phosphate. The catalysed reaction is GTP + succinate + CoA = succinyl-CoA + GDP + phosphate. Its pathway is carbohydrate metabolism; tricarboxylic acid cycle; succinate from succinyl-CoA (ligase route): step 1/1. Succinyl-CoA synthetase functions in the citric acid cycle (TCA), coupling the hydrolysis of succinyl-CoA to the synthesis of either ATP or GTP and thus represents the only step of substrate-level phosphorylation in the TCA. The beta subunit provides nucleotide specificity of the enzyme and binds the substrate succinate, while the binding sites for coenzyme A and phosphate are found in the alpha subunit. This chain is Succinate--CoA ligase [ADP-forming] subunit beta, found in Bartonella henselae (strain ATCC 49882 / DSM 28221 / CCUG 30454 / Houston 1) (Rochalimaea henselae).